The following is a 340-amino-acid chain: UDP-N-acetylglucosamine--N-acetylmuramyl-(pentapeptide) pyrophosphoryl-undecaprenol N-acetylglucosamine transferase (340 aa).

Residues 10–12 (TGG), N110, S171, and Q272 contribute to the UDP-N-acetyl-alpha-D-glucosamine site.

It belongs to the glycosyltransferase 28 family. MurG subfamily.

It localises to the cell membrane. It catalyses the reaction di-trans,octa-cis-undecaprenyl diphospho-N-acetyl-alpha-D-muramoyl-L-alanyl-D-glutamyl-meso-2,6-diaminopimeloyl-D-alanyl-D-alanine + UDP-N-acetyl-alpha-D-glucosamine = di-trans,octa-cis-undecaprenyl diphospho-[N-acetyl-alpha-D-glucosaminyl-(1-&gt;4)]-N-acetyl-alpha-D-muramoyl-L-alanyl-D-glutamyl-meso-2,6-diaminopimeloyl-D-alanyl-D-alanine + UDP + H(+). Its pathway is cell wall biogenesis; peptidoglycan biosynthesis. Functionally, cell wall formation. Catalyzes the transfer of a GlcNAc subunit on undecaprenyl-pyrophosphoryl-MurNAc-pentapeptide (lipid intermediate I) to form undecaprenyl-pyrophosphoryl-MurNAc-(pentapeptide)GlcNAc (lipid intermediate II). The protein is UDP-N-acetylglucosamine--N-acetylmuramyl-(pentapeptide) pyrophosphoryl-undecaprenol N-acetylglucosamine transferase of Wolbachia pipientis subsp. Culex pipiens (strain wPip).